A 987-amino-acid chain; its full sequence is Ephrin type-B receptor 2 (987 aa).

The N-terminal stretch at 1-19 (MGPLWFCCLPLALLPLLAA) is a signal peptide. The Extracellular portion of the chain corresponds to 20 to 544 (VEETLMDSTT…QTSVQEKLPL (525 aa)). The Eph LBD domain maps to 21 to 203 (EETLMDSTTA…FYRKCPRVIQ (183 aa)). 2 cysteine pairs are disulfide-bonded: C63–C185 and C98–C108. N-linked (GlcNAc...) asparagine glycosylation is found at N266, N337, N429, N478, and N483. 2 Fibronectin type-III domains span residues 325–435 (IPSA…TNQA) and 436–531 (APSA…TMTE). A helical membrane pass occupies residues 545-565 (IIGSSAAGLVFLIAVVVIIIV). The Cytoplasmic portion of the chain corresponds to 566-987 (CNRRGFERAD…QMNQIQSVEV (422 aa)). The Protein kinase domain occupies 622 to 885 (VKIEQVIGAG…QIVNTLDKMI (264 aa)). ATP contacts are provided by residues 628–636 (IGAGEFGEV) and K654. Residue D747 is the Proton acceptor of the active site. A Glycyl lysine isopeptide (Lys-Gly) (interchain with G-Cter in ubiquitin) cross-link involves residue K892. The SAM domain occupies 914–978 (TSFNTVDEWL…LNSIQVMRAQ (65 aa)). Residues 985-987 (VEV) carry the PDZ-binding motif.

It belongs to the protein kinase superfamily. Tyr protein kinase family. Ephrin receptor subfamily. In terms of assembly, heterotetramer upon binding of the ligand. The heterotetramer is composed of an ephrin dimer and a receptor dimer. Oligomerization is probably required to induce biological responses. Ligand binding induces cleavage by matrix metalloproteinases (MMPs) such as MMP7/MMP9, producing an EphB2/N-terminal fragment (NTF) and a C-terminal long fragment (EphB2-LF). EphB2-LF is further cleaved by MMPs, producing EphB2/CTF1 which is further cleaved by the PS1/gamma-secretase producing EphB2/CTF2. In terms of processing, polyubiquitinated; ligand binding stimulates ubiquitination. Ubiquitinated by RNF186 at Lys-892, mainly through 'Lys-27'-linked polyubiquitin chains.

It is found in the cell membrane. The protein localises to the cell projection. Its subcellular location is the axon. The protein resides in the dendrite. The enzyme catalyses L-tyrosyl-[protein] + ATP = O-phospho-L-tyrosyl-[protein] + ADP + H(+). Its function is as follows. Receptor tyrosine kinase which binds promiscuously transmembrane ephrin-B family ligands residing on adjacent cells, leading to contact-dependent bidirectional signaling into neighboring cells. The signaling pathway downstream of the receptor is referred to as forward signaling while the signaling pathway downstream of the ephrin ligand is referred to as reverse signaling. Functions in axon guidance during development. In addition to axon guidance, also regulates dendritic spines development and maturation and stimulates the formation of excitatory synapses. This is Ephrin type-B receptor 2 (EPHB2) from Coturnix japonica (Japanese quail).